The primary structure comprises 122 residues: Large ribosomal subunit protein uL14 (122 aa).

This sequence belongs to the universal ribosomal protein uL14 family. Part of the 50S ribosomal subunit. Forms a cluster with proteins L3 and L19. In the 70S ribosome, L14 and L19 interact and together make contacts with the 16S rRNA in bridges B5 and B8.

Functionally, binds to 23S rRNA. Forms part of two intersubunit bridges in the 70S ribosome. This chain is Large ribosomal subunit protein uL14, found in Campylobacter concisus (strain 13826).